The sequence spans 158 residues: Encapsulin nanocompartment cargo protein EncB (158 aa).

Fe cation contacts are provided by E22, E52, and H55. 2 consecutive short sequence motifs (di-iron-binding motif) follow at residues 52–55 (EKEH) and 58–61 (EAVH). Positions 92–158 (ATVHVPTPDG…RGGGGSGSGR (67 aa)) are disordered. Positions 142-149 (LTVGSLRR) are probable targeting peptide. The span at 148–158 (RRGGGGSGSGR) shows a compositional bias: gly residues.

Belongs to the ferritin-like superfamily.

It localises to the encapsulin nanocompartment. Its function is as follows. Cargo protein of a type 1 encapsulin nanocompartment. May help nucleate Fe atoms in the interior of the encapsulin nanocompartment. Present in about 36 copies/encapsulin nanocompartment. The chain is Encapsulin nanocompartment cargo protein EncB from Myxococcus xanthus (strain DK1622).